We begin with the raw amino-acid sequence, 739 residues long: DNA ligase (739 aa).

NAD(+)-binding positions include 34 to 38, 83 to 84, and E117; these read DADYD and SL. K119 functions as the N6-AMP-lysine intermediate in the catalytic mechanism. 4 residues coordinate NAD(+): R140, E175, K291, and K315. Positions 420, 423, 438, and 444 each coordinate Zn(2+). The 80-residue stretch at 660 to 739 folds into the BRCT domain; that stretch reads ADDSPVAGKT…DGWLDLIGQA (80 aa).

This sequence belongs to the NAD-dependent DNA ligase family. LigA subfamily. The cofactor is Mg(2+). Requires Mn(2+) as cofactor.

The catalysed reaction is NAD(+) + (deoxyribonucleotide)n-3'-hydroxyl + 5'-phospho-(deoxyribonucleotide)m = (deoxyribonucleotide)n+m + AMP + beta-nicotinamide D-nucleotide.. DNA ligase that catalyzes the formation of phosphodiester linkages between 5'-phosphoryl and 3'-hydroxyl groups in double-stranded DNA using NAD as a coenzyme and as the energy source for the reaction. It is essential for DNA replication and repair of damaged DNA. The protein is DNA ligase of Ruegeria sp. (strain TM1040) (Silicibacter sp.).